Consider the following 304-residue polypeptide: MMNNLDDNFDAILITGPTASGKSALALRLAAEVGGVVINADSMQVYDTLRVVTARPSEEDMQAVPHHLYGHVVAGAAYSTGDWLRDVAVLLQDLQAQNRLPVIVGGTGLYFKALTGGLSDMPAIPEAVRVMLRQRERVEGAESLHRDLTLRDPTVAARLDPRDGQRIIRALEVLEVTGQSISVFQTRSGPMIIDPQRARKLVVLPDRKLLHDRINRRFAMMMDEGAVEEVEALLAQNLSLDMPAMKAIGVSQIAAMLKGEISREDVIEKSSAATRQYAKRQMTWFRNQMNETWERVDPAANRSG.

Residue 16–23 (GPTASGKS) coordinates ATP. Substrate is bound at residue 18-23 (TASGKS). Interaction with substrate tRNA regions lie at residues 41-44 (DSMQ) and 165-169 (QRIIR).

It belongs to the IPP transferase family. Monomer. Mg(2+) serves as cofactor.

The enzyme catalyses adenosine(37) in tRNA + dimethylallyl diphosphate = N(6)-dimethylallyladenosine(37) in tRNA + diphosphate. In terms of biological role, catalyzes the transfer of a dimethylallyl group onto the adenine at position 37 in tRNAs that read codons beginning with uridine, leading to the formation of N6-(dimethylallyl)adenosine (i(6)A). This is tRNA dimethylallyltransferase from Allorhizobium ampelinum (strain ATCC BAA-846 / DSM 112012 / S4) (Agrobacterium vitis (strain S4)).